The sequence spans 261 residues: Ribosome biogenesis protein NSA2 (261 aa).

Residues 1–34 form a disordered region; the sequence is MPQNEYIEQHIKQHGRRLDYEERKRKKAAREGHR. Residues 7-34 show a composition bias toward basic and acidic residues; it reads IEQHIKQHGRRLDYEERKRKKAAREGHR. 2 consecutive short sequence motifs (nuclear localization signal) follow at residues 15–22 and 51–58; these read GRRLDYEE and AKKRYSEK. The interval 61 to 85 is disordered; that stretch reads MKKKIKTHQESKVKGPATPKEDDGE.

This sequence belongs to the eukaryotic ribosomal protein eS8 family. Ribosome biogenesis protein NSA2 subfamily. As to quaternary structure, component of the pre-66S ribosomal particle. Interacts with NOP7 and RRP1. Interacts with RSA4 (via WD repeats).

Its subcellular location is the nucleus. It localises to the nucleolus. Involved in the biogenesis of the 60S ribosomal subunit. May play a part in the quality control of pre-60S particles. The chain is Ribosome biogenesis protein NSA2 (NSA2) from Debaryomyces hansenii (strain ATCC 36239 / CBS 767 / BCRC 21394 / JCM 1990 / NBRC 0083 / IGC 2968) (Yeast).